An 894-amino-acid polypeptide reads, in one-letter code: Protein NLP9 (894 aa).

One can recognise an RWP-RK domain in the interval 517 to 603; that stretch reads QEISGARRLE…LDSVQGVEGG (87 aa). The stretch at 578-598 forms a coiled coil; that stretch reads RKINKVNRSLRKIQTVLDSVQ. The segment at 732–763 is disordered; that stretch reads NTRIERGNGTVEPNHSISSSMSDSSNSSGAVL. Positions 747–763 are enriched in low complexity; it reads SISSSMSDSSNSSGAVL. One can recognise a PB1 domain in the interval 792 to 875; it reads TLTVKATYRE…HTVKFLVRDI (84 aa).

Its subcellular location is the nucleus. Its function is as follows. Probable transcription factor. This chain is Protein NLP9 (NLP9), found in Arabidopsis thaliana (Mouse-ear cress).